Here is a 249-residue protein sequence, read N- to C-terminus: tRNA pseudouridine synthase A (249 aa).

D52 (nucleophile) is an active-site residue. Y110 lines the substrate pocket.

Belongs to the tRNA pseudouridine synthase TruA family. Homodimer.

It catalyses the reaction uridine(38/39/40) in tRNA = pseudouridine(38/39/40) in tRNA. Its function is as follows. Formation of pseudouridine at positions 38, 39 and 40 in the anticodon stem and loop of transfer RNAs. In Azobacteroides pseudotrichonymphae genomovar. CFP2, this protein is tRNA pseudouridine synthase A.